The sequence spans 375 residues: MSAVKLEAIVCHEPDESELSHLSDNGSKTKNGVVFQLLDQKSSEHRWFSERFLRWRRRYLPVDGDNRRDHGSVKQSGPLVSGAAYCISSCSMIILNKIVLSSYNFNAGVSLMLYQNLISCLVVAVLDISGVVSVEKFNWKLIRVWMPVNVIFVGMLVSGMYSLKYINVAMVTILKNATNILTGIGEVYMFRKRQNNKVWAAMFMMIISAISGGITDLTFDAVGYTWQLANCFLTASYSLTLRRVMDKAKQSTKSGSLNEVSMVLLNNLLSIPFGIILIILLGEWRYVISTDVTKDSMFWVVATASGFLGLAISFTSMWFLHQTGPTTYSLVGSLNKVPISLAGLVLFNVPLSLPNLFSILFGLFAGVVFARAKMS.

9 helical membrane passes run 79 to 99 (LVSG…NKIV), 112 to 132 (MLYQ…SGVV), 141 to 161 (LIRV…SGMY), 165 to 185 (YINV…TGIG), 199 to 219 (WAAM…DLTF), 262 to 282 (MVLL…ILLG), 300 to 320 (VVAT…MWFL), 327 to 347 (TYSL…LVLF), and 349 to 369 (VPLS…GVVF).

Belongs to the nucleotide-sugar transporter family. GDP-Mannose:GMP antiporter (GMA) (TC 2.A.7.13) subfamily. As to expression, expressed in rosette leaves, stems, flowers and siliques.

The protein resides in the golgi apparatus membrane. Functionally, GDP-mannose transporter that may be involved in the import of GDP-mannose from the cytoplasm into the Golgi lumen. In Arabidopsis thaliana (Mouse-ear cress), this protein is GDP-mannose transporter GONST2.